The sequence spans 199 residues: Recombination protein RecR (199 aa).

The C4-type zinc-finger motif lies at 58 to 73 (CKICFNITDKEVCDIC). The region spanning 81–176 (STICVVSHPM…KVTRIAHGIP (96 aa)) is the Toprim domain.

This sequence belongs to the RecR family.

In terms of biological role, may play a role in DNA repair. It seems to be involved in an RecBC-independent recombinational process of DNA repair. It may act with RecF and RecO. In Caldanaerobacter subterraneus subsp. tengcongensis (strain DSM 15242 / JCM 11007 / NBRC 100824 / MB4) (Thermoanaerobacter tengcongensis), this protein is Recombination protein RecR.